Here is an 85-residue protein sequence, read N- to C-terminus: Small ribosomal subunit protein bS18 (85 aa).

Over residues 1 to 12 (MAFAQAGGGGGQ) the composition is skewed to gly residues. The interval 1 to 22 (MAFAQAGGGGGQRRPFFRRRKT) is disordered.

It belongs to the bacterial ribosomal protein bS18 family. As to quaternary structure, part of the 30S ribosomal subunit. Forms a tight heterodimer with protein bS6.

Functionally, binds as a heterodimer with protein bS6 to the central domain of the 16S rRNA, where it helps stabilize the platform of the 30S subunit. The chain is Small ribosomal subunit protein bS18 from Azorhizobium caulinodans (strain ATCC 43989 / DSM 5975 / JCM 20966 / LMG 6465 / NBRC 14845 / NCIMB 13405 / ORS 571).